We begin with the raw amino-acid sequence, 183 residues long: ATP synthase subunit b, chloroplastic (183 aa).

A helical membrane pass occupies residues 33-51; sequence IINLSVVIGVVVSFGGDAL.

Belongs to the ATPase B chain family. F-type ATPases have 2 components, F(1) - the catalytic core - and F(0) - the membrane proton channel. F(1) has five subunits: alpha(3), beta(3), gamma(1), delta(1), epsilon(1). F(0) has four main subunits: a(1), b(1), b'(1) and c(10-14). The alpha and beta chains form an alternating ring which encloses part of the gamma chain. F(1) is attached to F(0) by a central stalk formed by the gamma and epsilon chains, while a peripheral stalk is formed by the delta, b and b' chains.

Its subcellular location is the plastid. The protein resides in the chloroplast thylakoid membrane. F(1)F(0) ATP synthase produces ATP from ADP in the presence of a proton or sodium gradient. F-type ATPases consist of two structural domains, F(1) containing the extramembraneous catalytic core and F(0) containing the membrane proton channel, linked together by a central stalk and a peripheral stalk. During catalysis, ATP synthesis in the catalytic domain of F(1) is coupled via a rotary mechanism of the central stalk subunits to proton translocation. Its function is as follows. Component of the F(0) channel, it forms part of the peripheral stalk, linking F(1) to F(0). The polypeptide is ATP synthase subunit b, chloroplastic (Oltmannsiellopsis viridis (Marine flagellate)).